The chain runs to 97 residues: YcgL domain-containing protein CPS_3517 (97 aa).

Residues 1 to 85 form the YcgL domain; that stretch reads MLCAIYKSAR…PQEDLLKEHK (85 aa).

This is YcgL domain-containing protein CPS_3517 from Colwellia psychrerythraea (strain 34H / ATCC BAA-681) (Vibrio psychroerythus).